An 87-amino-acid chain; its full sequence is MKRLLVLTLVSAILMAEFLDATDAVTTRRRRRRHLHKGAGKSQMLEEVNMEVKAKNFAQEMEREDGKLHFLGTYNEPVMNNDLFCGL.

An N-terminal signal peptide occupies residues methionine 1–alanine 16.

The protein is Developmentally-regulated ectodermal protein of Tripneustes gratilla (Hawaian sea urchin).